A 233-amino-acid polypeptide reads, in one-letter code: Protein FAM204A (233 aa).

The tract at residues 1-126 is disordered; sequence MWSGLLPPGL…HSEPSSNETQ (126 aa). The span at 13–24 shows a compositional bias: acidic residues; sequence SDAESNSEDEAT. Over residues 39–58 the composition is skewed to basic and acidic residues; it reads ESIRKTEIIDFSTDEPKTET. The segment covering 97 to 109 has biased composition (basic residues); that stretch reads FRGKRRKRSRKDK. Residues 144–164 are a coiled coil; sequence VKRKKVEKSGLEKRIDQAVEE.

The chain is Protein FAM204A (FAM204A) from Homo sapiens (Human).